The following is a 106-amino-acid chain: Small ribosomal subunit protein uS10 (106 aa).

The protein belongs to the universal ribosomal protein uS10 family. Part of the 30S ribosomal subunit.

Functionally, involved in the binding of tRNA to the ribosomes. In Wolbachia sp. subsp. Drosophila simulans (strain wRi), this protein is Small ribosomal subunit protein uS10.